Reading from the N-terminus, the 412-residue chain is Phosphoglycerate kinase (412 aa).

Substrate contacts are provided by residues 24–26 (DLN), R44, 67–70 (HLGR), R126, and R170. ATP contacts are provided by residues K220, G308, E339, and 368–371 (GGDS).

It belongs to the phosphoglycerate kinase family. Monomer.

The protein localises to the cytoplasm. The catalysed reaction is (2R)-3-phosphoglycerate + ATP = (2R)-3-phospho-glyceroyl phosphate + ADP. It functions in the pathway carbohydrate degradation; glycolysis; pyruvate from D-glyceraldehyde 3-phosphate: step 2/5. The protein is Phosphoglycerate kinase of Mycobacteroides abscessus (strain ATCC 19977 / DSM 44196 / CCUG 20993 / CIP 104536 / JCM 13569 / NCTC 13031 / TMC 1543 / L948) (Mycobacterium abscessus).